A 92-amino-acid chain; its full sequence is Large ribosomal subunit protein eL43 (92 aa).

The C4-type zinc-finger motif lies at 39-60 (CSFCGKKAVKRGAAGIWNCSSC).

Belongs to the eukaryotic ribosomal protein eL43 family.

The chain is Large ribosomal subunit protein eL43 (RPL43) from Eremothecium gossypii (strain ATCC 10895 / CBS 109.51 / FGSC 9923 / NRRL Y-1056) (Yeast).